The primary structure comprises 847 residues: MNKTTEYIDAMPIAASEKAALPKTDIRAVHQALDAEHRTWAREDDSPQGSVKARLEQAWPDSLADGQLIKDDEGRDQLKAMPEAKRSSMFPDPWRTNPVGRFWDRLRGRDVTPRYLARLTKEEQESEQKWRTVGTIRRYILLILTLAQTVVATWYMKTILPYQGWALINPMDMVGQDVWVSFMQLLPYMLQTGILILFAVLFCWVSAGFWTALMGFLQLLIGRDKYSISASTVGDEPLNPEHRTALIMPICNEDVNRVFAGLRATWESVKATGNAKHFDVYILSDSYNPDICVAEQKAWMELIAEVGGEGQIFYRRRRRRVKRKSGNIDDFCRRWGSQYSYMVVLDADSVMTGDCLCGLVRLMEANPNAGIIQSSPKASGMDTLYARCQQFATRVYGPLFTAGLHFWQLGESHYWGHNAIIRVKPFIEHCALAPLPGEGSFAGSILSHDFVEAALMRRAGWGVWIAYDLPGSYEELPPNLLDELKRDRRWCHGNLMNFRLFLVKGMHPVHRAVFLTGVMSYLSAPLWFMFLALSTALQVVHALTEPQYFLQPRQLFPVWPQWRPELAIALFASTMVLLFLPKLLSILLIWCKGTKEYGGFWRVTLSLLLEVLFSVLLAPVRMLFHTVFVVSAFLGWEVVWNSPQRDDDSTSWGEAFKRHGSQLLLGLVWAVGMAWLDLRFLFWLAPIVFSLILSPFVSVISSRATVGLRTKRWKLFLIPEEYSPPQVLVDTDRFLEMNRQRSLDDGFMHAVFNPSFNALATAMATARHRASKVLEIARDRHVEQALNETPEKLNRDRRLVLLSDPVTMARLHFRVWNSPERYSSWVSYYEGIKLNPLALRKPDAASQ.

At 1–138 (MNKTTEYIDA…KWRTVGTIRR (138 aa)) the chain is on the cytoplasmic side. A helical membrane pass occupies residues 139 to 156 (YILLILTLAQTVVATWYM). Over 157–193 (KTILPYQGWALINPMDMVGQDVWVSFMQLLPYMLQTG) the chain is Periplasmic. A helical membrane pass occupies residues 194-216 (ILILFAVLFCWVSAGFWTALMGF). At 217-511 (LQLLIGRDKY…LVKGMHPVHR (295 aa)) the chain is on the cytoplasmic side. A helical membrane pass occupies residues 512–534 (AVFLTGVMSYLSAPLWFMFLALS). The Periplasmic segment spans residues 535 to 567 (TALQVVHALTEPQYFLQPRQLFPVWPQWRPELA). The chain crosses the membrane as a helical span at residues 568 to 590 (IALFASTMVLLFLPKLLSILLIW). Topologically, residues 591 to 602 (CKGTKEYGGFWR) are cytoplasmic. The chain crosses the membrane as a helical span at residues 603–625 (VTLSLLLEVLFSVLLAPVRMLFH). Residues 626–679 (TVFVVSAFLGWEVVWNSPQRDDDSTSWGEAFKRHGSQLLLGLVWAVGMAWLDLR) lie on the Periplasmic side of the membrane. Residues 680-702 (FLFWLAPIVFSLILSPFVSVISS) traverse the membrane as a helical segment. The Cytoplasmic segment spans residues 703 to 847 (RATVGLRTKR…ALRKPDAASQ (145 aa)).

Belongs to the glycosyltransferase 2 family. OpgH subfamily.

Its subcellular location is the cell inner membrane. It functions in the pathway glycan metabolism; osmoregulated periplasmic glucan (OPG) biosynthesis. In terms of biological role, involved in the biosynthesis of osmoregulated periplasmic glucans (OPGs). In Escherichia coli O6:H1 (strain CFT073 / ATCC 700928 / UPEC), this protein is Glucans biosynthesis glucosyltransferase H.